The chain runs to 137 residues: Large ribosomal subunit protein uL16 (137 aa).

It belongs to the universal ribosomal protein uL16 family. Part of the 50S ribosomal subunit.

Its function is as follows. Binds 23S rRNA and is also seen to make contacts with the A and possibly P site tRNAs. The sequence is that of Large ribosomal subunit protein uL16 from Cereibacter sphaeroides (strain ATCC 17025 / ATH 2.4.3) (Rhodobacter sphaeroides).